The following is a 306-amino-acid chain: Lipoyl synthase (306 aa).

[4Fe-4S] cluster is bound by residues C41, C46, C52, C68, C72, C75, and S281. The Radical SAM core domain occupies 54–270 (GARRTATFMI…RKVAMDKGFK (217 aa)). The tract at residues 283–306 (HADEQVNEAAKEKHRLGEEKLQQN) is disordered.

This sequence belongs to the radical SAM superfamily. Lipoyl synthase family. Requires [4Fe-4S] cluster as cofactor.

It localises to the cytoplasm. The enzyme catalyses [[Fe-S] cluster scaffold protein carrying a second [4Fe-4S](2+) cluster] + N(6)-octanoyl-L-lysyl-[protein] + 2 oxidized [2Fe-2S]-[ferredoxin] + 2 S-adenosyl-L-methionine + 4 H(+) = [[Fe-S] cluster scaffold protein] + N(6)-[(R)-dihydrolipoyl]-L-lysyl-[protein] + 4 Fe(3+) + 2 hydrogen sulfide + 2 5'-deoxyadenosine + 2 L-methionine + 2 reduced [2Fe-2S]-[ferredoxin]. The protein operates within protein modification; protein lipoylation via endogenous pathway; protein N(6)-(lipoyl)lysine from octanoyl-[acyl-carrier-protein]. Functionally, catalyzes the radical-mediated insertion of two sulfur atoms into the C-6 and C-8 positions of the octanoyl moiety bound to the lipoyl domains of lipoate-dependent enzymes, thereby converting the octanoylated domains into lipoylated derivatives. This Staphylococcus haemolyticus (strain JCSC1435) protein is Lipoyl synthase.